Consider the following 198-residue polypeptide: Guanylate kinase (198 aa).

One can recognise a Guanylate kinase-like domain in the interval 8–188 (GRVVVLSGPS…ACSELVSLLV (181 aa)). 15-22 (GPSAVGKS) serves as a coordination point for ATP.

It belongs to the guanylate kinase family.

The protein localises to the cytoplasm. The catalysed reaction is GMP + ATP = GDP + ADP. Essential for recycling GMP and indirectly, cGMP. The sequence is that of Guanylate kinase from Mycobacterium sp. (strain MCS).